Here is a 326-residue protein sequence, read N- to C-terminus: MQTALLKPKIIAVEPLGDHHAKVVMEPFERGYGHTLGNALRRVLLSSMVGYAPTEVTIAGVVHEYSTIDGVQEDVVNLLLNLKGVVFKLHNRDEVTVSLRKDGEGVVTAADIELPHDVEIINPNHVIAHLSAGGKLDMQIKVEQGRGYVPGNVRKFGDESGKVIGRIVLDASFSPVRRVSYAVESARVEQRTDLDKLVMNIETDGVISPEEAIRQSARILVDQLSVFAALEGTESAAEAASSRTPQIDPILLRPVDDLELTVRSANCLKAENIYYIGDLIQRTENELLKTPNLGRKSLNEIKEVLASRGLTLGMKLENWPPAGLEK.

Residues 1–231 are alpha N-terminal domain (alpha-NTD); sequence MQTALLKPKI…DQLSVFAALE (231 aa). The interval 247-326 is alpha C-terminal domain (alpha-CTD); sequence IDPILLRPVD…ENWPPAGLEK (80 aa).

It belongs to the RNA polymerase alpha chain family. As to quaternary structure, homodimer. The RNAP catalytic core consists of 2 alpha, 1 beta, 1 beta' and 1 omega subunit. When a sigma factor is associated with the core the holoenzyme is formed, which can initiate transcription.

It catalyses the reaction RNA(n) + a ribonucleoside 5'-triphosphate = RNA(n+1) + diphosphate. In terms of biological role, DNA-dependent RNA polymerase catalyzes the transcription of DNA into RNA using the four ribonucleoside triphosphates as substrates. The protein is DNA-directed RNA polymerase subunit alpha of Cupriavidus necator (strain ATCC 17699 / DSM 428 / KCTC 22496 / NCIMB 10442 / H16 / Stanier 337) (Ralstonia eutropha).